The following is a 615-amino-acid chain: Chaperone protein DnaK (615 aa).

Phosphothreonine; by autocatalysis is present on T195. The interval 592–615 (EKGAQAASGKGPDDVIDADYKPAD) is disordered.

It belongs to the heat shock protein 70 family.

Functionally, acts as a chaperone. The polypeptide is Chaperone protein DnaK (Thermus thermophilus (strain ATCC BAA-163 / DSM 7039 / HB27)).